We begin with the raw amino-acid sequence, 61 residues long: Short neurotoxin 4 (61 aa).

4 cysteine pairs are disulfide-bonded: cysteine 3-cysteine 23, cysteine 17-cysteine 40, cysteine 42-cysteine 53, and cysteine 54-cysteine 59.

Belongs to the three-finger toxin family. Short-chain subfamily. Type I alpha-neurotoxin sub-subfamily. In terms of tissue distribution, expressed by the venom gland.

It is found in the secreted. Functionally, binds to muscle nicotinic acetylcholine receptor (nAChR) and inhibit acetylcholine from binding to the receptor, thereby impairing neuromuscular transmission. In Naja annulifera (Banded Egyptian cobra), this protein is Short neurotoxin 4.